We begin with the raw amino-acid sequence, 325 residues long: MAEGRCSQGKEPAEAMISLVALGEPLIQLNAVTPGPLRYVAYFEKHVAGSEANFCIAATMAGARCSLIARVGDDEFGRNIVEYLRGRGVDVSHVKVDPGAPTGIYFVQRHFPVPGRSRLIYYRKGSAGSRVGPDDVDSSLISSADAVHSTGITLALSDSANRAVHKAFGEAKRRTFDTNIRPALWPDLAAARRAILDVLNYGVDVLVTDPDDTQILLGVRDPEEAYRKYRELGVQTLVYKLGAEGAYVFWNGGSYFRDALKVAVEDPTGAGDAVAGYFVALYLSGVDPRRALDLAVAASALVVGVRGDNEALPSPREAEELLKAL.

Substrate is bound by residues 49–53 (GSEAN), Y105, 121–123 (YYR), and R181. Residues 179 to 181 (NIR), 240 to 245 (KLGAEG), and 269 to 272 (GAGD) contribute to the ATP site. Substrate is bound by residues D272 and D308. D272 (proton acceptor) is an active-site residue.

The protein belongs to the carbohydrate kinase PfkB family. In terms of assembly, homohexamer; trimer of dimers.

It carries out the reaction 2-dehydro-3-deoxy-D-gluconate + ATP = 2-dehydro-3-deoxy-6-phospho-D-gluconate + ADP + H(+). It functions in the pathway carbohydrate acid metabolism; 2-dehydro-3-deoxy-D-gluconate degradation; D-glyceraldehyde 3-phosphate and pyruvate from 2-dehydro-3-deoxy-D-gluconate: step 1/2. Involved in the degradation of glucose via the semi-phosphorylative Entner-Doudoroff pathway. Catalyzes the phosphorylation of 2-keto-3-deoxygluconate (KDG) yielding 2-keto-3-deoxy-6-phosphogluconate (KDPG). This is 2-dehydro-3-deoxygluconokinase (kdgK) from Thermoproteus tenax.